We begin with the raw amino-acid sequence, 400 residues long: 3-phenylpropionate/cinnamic acid dioxygenase ferredoxin--NAD(+) reductase component (400 aa).

5–36 (TIIIVGGGQAAAMAAASLRQQGFTGELHLFSD) is an FAD binding site. 146–174 (SVVIIGAGTIGLELAASATQRRCKVTVIE) provides a ligand contact to NAD(+).

It belongs to the bacterial ring-hydroxylating dioxygenase ferredoxin reductase family. In terms of assembly, this dioxygenase system consists of four proteins: the two subunits of the hydroxylase component (HcaE and HcaF), a ferredoxin (HcaC) and a ferredoxin reductase (HcaD). The cofactor is FAD.

The enzyme catalyses 2 reduced [2Fe-2S]-[ferredoxin] + NAD(+) + H(+) = 2 oxidized [2Fe-2S]-[ferredoxin] + NADH. It participates in aromatic compound metabolism; 3-phenylpropanoate degradation. Its function is as follows. Part of the multicomponent 3-phenylpropionate dioxygenase, that converts 3-phenylpropionic acid (PP) and cinnamic acid (CI) into 3-phenylpropionate-dihydrodiol (PP-dihydrodiol) and cinnamic acid-dihydrodiol (CI-dihydrodiol), respectively. This is 3-phenylpropionate/cinnamic acid dioxygenase ferredoxin--NAD(+) reductase component from Escherichia coli (strain K12 / MC4100 / BW2952).